The sequence spans 564 residues: Arrestin domain-containing protein E (564 aa).

Residues 74-146 (SQQPQSSQPS…NTSNGFSPPN (73 aa)) are compositionally biased toward low complexity. Disordered stretches follow at residues 74 to 150 (SQQP…LNKN) and 245 to 286 (ASQP…SFPS). Positions 250-259 (PQQPQQPQPQ) are enriched in pro residues. Over residues 260 to 269 (QPQQQQFQQQ) the composition is skewed to low complexity. The segment covering 270-285 (SYNNNNSTQSMLSSFP) has biased composition (polar residues). Residues 348-413 (DKCAACDALL…PMCFESTTGL (66 aa)) enclose the LIM zinc-binding domain.

The chain is Arrestin domain-containing protein E (adcE) from Dictyostelium discoideum (Social amoeba).